A 648-amino-acid polypeptide reads, in one-letter code: MNNTKKDQYSSQSIKVLEGLSAVRKRPGMYIGSTDQKGLHHMIWEIIDNSVDEMMAGYGTTVKLTLKDNYLVEVEDDGRGIPVDIHEKTNKSTVETVLTILHAGGKFDSDTYSMSGGLHGVGASVVNALSSSFKVWVNRDYKIHYIEFKDGGVPLKPLEIIGTDSKKQGTRIQFVPDFSIMEQFEYDETIIADRIEQLAFLNKGIKFIFNDERTDKKTKQEWLYEGGIKQYVENLNASKEPIIPQIIYGEKKTKVTLPKRNLEVTMLLEVAFQYTNGYYNSTYSFCNNIHTNQGGTHEEGFKNALYKIINRYALEKKFIKETDGKISKEDLSEGLTAIISIKHSEPQYQGQTKDRLGNTEVREFTNSVVSELLERFFLENPEEAAKITAKAVSAMFSRKRSEAALESARKSPFESASLPGKLADCTTKDMEISELYIVEGDSAGGSAKSGRDRFYQAILPLRGKVLNVEKANHEKIFKNEEIRTLITAIGAGVNPEFSLDKIRYNKIIIMTDADVDGAHIRILLLTFFFRHMFPLIEKGHVYIAQPPLYRVSYNKQNKYIYSDAQLEEWKNQNPNVRYELQRYKGLGEMDDVQLWETTMDPEKRTLLKVSINDAANADKTFSLLMGDEVSPRRDFIEKNAKSVKNIDF.

Residues 433 to 547 (SELYIVEGDS…KGHVYIAQPP (115 aa)) enclose the Toprim domain. The Mg(2+) site is built by glutamate 439, aspartate 512, and aspartate 514.

The protein belongs to the type II topoisomerase GyrB family. Heterotetramer, composed of two GyrA and two GyrB chains. In the heterotetramer, GyrA contains the active site tyrosine that forms a transient covalent intermediate with DNA, while GyrB binds cofactors and catalyzes ATP hydrolysis. The cofactor is Mg(2+). Mn(2+) serves as cofactor. It depends on Ca(2+) as a cofactor.

The protein localises to the cytoplasm. The enzyme catalyses ATP-dependent breakage, passage and rejoining of double-stranded DNA.. A type II topoisomerase that negatively supercoils closed circular double-stranded (ds) DNA in an ATP-dependent manner to modulate DNA topology and maintain chromosomes in an underwound state. Negative supercoiling favors strand separation, and DNA replication, transcription, recombination and repair, all of which involve strand separation. Also able to catalyze the interconversion of other topological isomers of dsDNA rings, including catenanes and knotted rings. Type II topoisomerases break and join 2 DNA strands simultaneously in an ATP-dependent manner. The protein is DNA gyrase subunit B of Mycoplasmoides gallisepticum (strain R(low / passage 15 / clone 2)) (Mycoplasma gallisepticum).